The sequence spans 437 residues: Aspartate aminotransferase, mitochondrial (437 aa).

L-aspartate is bound by residues G72, W167, and N220. Residue K284 is modified to N6-(pyridoxal phosphate)lysine. Residue R413 participates in L-aspartate binding.

It belongs to the class-I pyridoxal-phosphate-dependent aminotransferase family. Homodimer. It depends on pyridoxal 5'-phosphate as a cofactor.

Its subcellular location is the mitochondrion matrix. The enzyme catalyses L-aspartate + 2-oxoglutarate = oxaloacetate + L-glutamate. Functionally, plays a key role in amino acid metabolism. Important for metabolite exchange between mitochondria and cytosol. This chain is Aspartate aminotransferase, mitochondrial, found in Schizosaccharomyces pombe (strain 972 / ATCC 24843) (Fission yeast).